We begin with the raw amino-acid sequence, 320 residues long: Acetyl-coenzyme A carboxylase carboxyl transferase subunit alpha (320 aa).

The CoA carboxyltransferase C-terminal domain maps to 42 to 295 (IEEKALAALT…GDAIAKSFAD (254 aa)).

The protein belongs to the AccA family. In terms of assembly, acetyl-CoA carboxylase is a heterohexamer composed of biotin carboxyl carrier protein (AccB), biotin carboxylase (AccC) and two subunits each of ACCase subunit alpha (AccA) and ACCase subunit beta (AccD).

Its subcellular location is the cytoplasm. It catalyses the reaction N(6)-carboxybiotinyl-L-lysyl-[protein] + acetyl-CoA = N(6)-biotinyl-L-lysyl-[protein] + malonyl-CoA. It participates in lipid metabolism; malonyl-CoA biosynthesis; malonyl-CoA from acetyl-CoA: step 1/1. Functionally, component of the acetyl coenzyme A carboxylase (ACC) complex. First, biotin carboxylase catalyzes the carboxylation of biotin on its carrier protein (BCCP) and then the CO(2) group is transferred by the carboxyltransferase to acetyl-CoA to form malonyl-CoA. This is Acetyl-coenzyme A carboxylase carboxyl transferase subunit alpha from Rhodopseudomonas palustris (strain BisA53).